The sequence spans 991 residues: Receptor-like protein kinase HAIKU2 (991 aa).

Residues 1–19 form the signal peptide; it reads MLRLLFIVRLLFLMPLASS. Over 20-616 the chain is Extracellular; it reads RSNHSEEVEN…KRKHLSKVDM (597 aa). The N-linked (GlcNAc...) asparagine glycan is linked to Asn-22. LRR repeat units lie at residues 66-90, 99-123, 125-148, 150-170, 171-196, 197-220, 221-244, 246-267, 269-291, 292-314, 315-339, 341-363, 365-387, 388-411, 413-435, 436-459, 461-482, 483-508, 510-531, 532-554, and 555-578; these read DGNVVEINLGSRSLINRDDDGRFTD, LKLLEKLVLGNNSLRGQIGTNLGKC, RLRYLDLGINNFSGEFPAIDSLQL, EFLSLNASGISGIFPWSSLKD, LKRLSFLSVGDNRFGSHPFPREILNL, TALQWVYLSNSSITGKIPEGIKNL, VRLQNLELSDNQISGEIPKEIVQL, NLRQLEIYSNDLTGKLPLGFRN, TNLRNFDASNNSLEGDLSELRFL, KNLVSLGMFENRLTGEIPKEFGD, FKSLAALSLYRNQLTGKLPRRLGSW, AFKYIDVSENFLEGQIPPYMCKK, VMTHLLMLQNRFTGQFPESYAKC, KTLIRLRVSNNSLSGMIPSGIWGL, NLQFLDLASNYFEGNLTGDIGNA, KSLGSLDLSNNRFSGSLPFQISGA, SLVSVNLRMNKFSGIVPESFGK, LKELSSLILDQNNLSGAIPKSLGLCT, LVDLNFAGNSLSEEIPESLGSL, KLLNSLNLSGNKLSGMIPVGLSA, and LKLSLLDLSNNQLTGSVPESLVSG. Residues Asn-109, Asn-135, Asn-155, Asn-195, and Asn-206 are each glycosylated (N-linked (GlcNAc...) asparagine). 2 N-linked (GlcNAc...) asparagine glycosylation sites follow: Asn-267 and Asn-278. Asn-397 and Asn-427 each carry an N-linked (GlcNAc...) asparagine glycan. Asn-495 is a glycosylation site (N-linked (GlcNAc...) asparagine). N-linked (GlcNAc...) asparagine glycosylation is present at Asn-538. The chain crosses the membrane as a helical span at residues 617 to 637; the sequence is CFIVAAILALFFLFSYVIFKI. Residues 638–991 are Cytoplasmic-facing; it reads RRDKLNKTVQ…SANDEITKVV (354 aa). The Protein kinase domain maps to 671–970; the sequence is IKSENIIGRG…SMLEKIEPSY (300 aa). Residues 677 to 685 and Lys-699 each bind ATP; that span reads IGRGGQGNV. Phosphotyrosine is present on residues Tyr-762 and Tyr-801. Residue Asp-814 is the Proton acceptor of the active site. Tyr-859 and Tyr-866 each carry phosphotyrosine. At Thr-867 the chain carries Phosphothreonine. The tract at residues 972–991 is disordered; it reads KNSGEASYGESANDEITKVV.

It belongs to the protein kinase superfamily. Ser/Thr protein kinase family. Expressed in the endosperm of fertilized ovules.

It localises to the membrane. It carries out the reaction L-seryl-[protein] + ATP = O-phospho-L-seryl-[protein] + ADP + H(+). The enzyme catalyses L-threonyl-[protein] + ATP = O-phospho-L-threonyl-[protein] + ADP + H(+). Functionally, modulates the seed size by negatively regulating the cellularization of syncytial endosperm. In Arabidopsis thaliana (Mouse-ear cress), this protein is Receptor-like protein kinase HAIKU2 (IKU2).